A 486-amino-acid polypeptide reads, in one-letter code: Surface lipoprotein assembly modifier (486 aa).

Residues 1 to 29 (MKNGVKQISFLSLIGLSLIGLSLTNIAWA) form the signal peptide. The N-terminal domain stretch occupies residues 30-197 (KVARPKNDTL…QYLLTLNQRN (168 aa)). The segment at 198 to 486 (QWIWQVGLNF…RIYLEIGKIF (289 aa)) is C-terminal probable beta barrel. Beta stranded transmembrane passes span 199-209 (WIWQVGLNFLN), 237-248 (GRVFFISRKKWP), 253-262 (FFSKTMFNGN), 276-286 (TLRIGGGLGYQ), 290-300 (VEVSLFPFQEK), 320-330 (LGIRLENVDWL), 334-344 (WQISTALEYGE), 358-367 (YFISSTLFYL), 373-382 (FWFVGMDFHR), 395-404 (KTLRLGWGQD), 409-419 (ISSRLTFSYAN), 437-446 (YATTITLWHR), 453-463 (LTPKLSWDYQK), and 476-486 (NRIYLEIGKIF).

It belongs to the Slam family.

Its subcellular location is the cell outer membrane. Its function is as follows. Required for correct export to the cell surface of some cell outer membrane lipoproteins (tested with TpbP) upon heterologous expression in E.coli and probably also in Haemophilus. The protein is Surface lipoprotein assembly modifier of Haemophilus influenzae (strain 86-028NP).